The following is a 381-amino-acid chain: Class E basic helix-loop-helix protein 22 (381 aa).

Disordered stretches follow at residues 30-94 (RLEA…GGGG), 135-154 (RGSV…DSDG), and 188-242 (HLHG…EQKA). Residues 82–94 (GGGGGSAGSGGGG) are compositionally biased toward gly residues. Gly residues predominate over residues 198-225 (GGLGGGGGGGSSSGSSGGGGGSGSGSGG). Residues 242–296 (ALRLNINARERRRMHDLNDALDELRAVIPYAHSPSVRKLSKIATLLLAKNYILMQ) form the bHLH domain.

As to quaternary structure, interacts with PRDM8. Brain-specific, with the highest expression in the cerebellum.

Its subcellular location is the nucleus. Its function is as follows. Inhibits DNA binding of TCF3/E47 homodimers and TCF3 (E47)/NEUROD1 heterodimers and acts as a strong repressor of Neurod1 and Myod-responsive genes, probably by heterodimerization with class a basic helix-loop-helix factors. Despite the presence of an intact basic domain, does not bind to DNA. In the brain, may function as an area-specific transcription factor that regulates the postmitotic acquisition of area identities and elucidate the genetic hierarchy between progenitors and postmitotic neurons driving neocortical arealization. May be required for the survival of a specific population of inhibitory neurons in the superficial laminae of the spinal cord dorsal horn that may regulate pruritis. Seems to play a crucial role in the retinogenesis, in the specification of amacrine and bipolar subtypes. Forms with PRDM8 a transcriptional repressor complex controlling genes involved in neural development and neuronal differentiation. In Homo sapiens (Human), this protein is Class E basic helix-loop-helix protein 22 (BHLHE22).